Reading from the N-terminus, the 538-residue chain is Beta-1,4-mannosyl-glycoprotein 4-beta-N-acetylglucosaminyltransferase (538 aa).

At 1-7 the chain is on the cytoplasmic side; it reads MKMRRYK. A helical; Signal-anchor for type II membrane protein membrane pass occupies residues 8–23; sequence LFLMFCMAGLCLISFL. The Lumenal segment spans residues 24-538; the sequence is HFFKTLSYVT…VRGKLDTAEG (515 aa). Residues 120–161 are disordered; the sequence is PGTRMLEKPSPGRTEEKTEVSEGSSARGPARRPMRHVLSSRE. Residues Asn-245, Asn-263, and Asn-401 are each glycosylated (N-linked (GlcNAc...) asparagine). Residues 507 to 538 are disordered; that stretch reads REPKSTVEGGRQNQGSDGRSSAVRGKLDTAEG.

The protein belongs to the glycosyltransferase 17 family. As to quaternary structure, interacts with MGAT4D. As to expression, highly expressed in brain and kidney and to a much lesser extent in stomach, heart, intestine, uterus, testis, ovary and lung. Not present in spleen, liver and muscle. In brain, expressed in neurons of hippocampus.

It localises to the golgi apparatus membrane. The enzyme catalyses N(4)-{beta-D-GlcNAc-(1-&gt;2)-alpha-D-Man-(1-&gt;3)-[beta-D-GlcNAc-(1-&gt;2)-alpha-D-Man-(1-&gt;6)]-beta-D-Man-(1-&gt;4)-beta-D-GlcNAc-(1-&gt;4)-beta-D-GlcNAc}-L-asparaginyl-[protein] + UDP-N-acetyl-alpha-D-glucosamine = N(4)-{beta-D-GlcNAc-(1-&gt;2)-alpha-D-Man-(1-&gt;3)-[beta-D-GlcNAc-(1-&gt;4)]-[beta-D-GlcNAc-(1-&gt;2)-alpha-D-Man-(1-&gt;6)]-beta-D-Man-(1-&gt;4)-beta-D-GlcNAc-(1-&gt;4)-beta-D-GlcNAc}-L-asparaginyl-[protein] + UDP + H(+). It participates in protein modification; protein glycosylation. Its function is as follows. It is involved in the regulation of the biosynthesis and biological function of glycoprotein oligosaccharides. Catalyzes the addition of N-acetylglucosamine in beta 1-4 linkage to the beta-linked mannose of the trimannosyl core of N-linked sugar chains, called bisecting N-acetylglucosamine (GlcNAc). It is one of the most important enzymes involved in the regulation of the biosynthesis of glycoprotein oligosaccharides. The addition of this bisecting GlcNAc residue alters not only the composition, but also the conformation of the N-glycan. The introduction of the bisecting GlcNAc residue results in the suppression of further processing and elongation of N-glycans, precluding the formation of beta-1,6 GlcNAc branching, catalyzed by MGAT5 since it is unable to use the bisected oligosaccharide as a substrate. Addition of bisecting N-acetylglucosamine to CDH1/E-cadherin modulates CDH1 cell membrane location. Inhibits NeuAc-alpha-2,3-Gal-beta-1,4-GlcNAc- formation which modulates sialylation levels and plays a role in cell migration regulation. In brain, addition of bisecting N-acetylglucosamine to BACE1 blocks its lysosomal targeting in response to oxidative stress and further degradation which increases its location to early endosome and the APP cleavage. This is Beta-1,4-mannosyl-glycoprotein 4-beta-N-acetylglucosaminyltransferase from Mus musculus (Mouse).